A 160-amino-acid chain; its full sequence is 6,7-dimethyl-8-ribityllumazine synthase (160 aa).

5-amino-6-(D-ribitylamino)uracil-binding positions include Phe-28, 62–64, and 86–88; these read ALE and AVI. 91–92 lines the (2S)-2-hydroxy-3-oxobutyl phosphate pocket; sequence ET. Residue His-94 is the Proton donor of the active site. Residue Asn-119 participates in 5-amino-6-(D-ribitylamino)uracil binding. Arg-133 contributes to the (2S)-2-hydroxy-3-oxobutyl phosphate binding site.

It belongs to the DMRL synthase family.

It catalyses the reaction (2S)-2-hydroxy-3-oxobutyl phosphate + 5-amino-6-(D-ribitylamino)uracil = 6,7-dimethyl-8-(1-D-ribityl)lumazine + phosphate + 2 H2O + H(+). The protein operates within cofactor biosynthesis; riboflavin biosynthesis; riboflavin from 2-hydroxy-3-oxobutyl phosphate and 5-amino-6-(D-ribitylamino)uracil: step 1/2. Functionally, catalyzes the formation of 6,7-dimethyl-8-ribityllumazine by condensation of 5-amino-6-(D-ribitylamino)uracil with 3,4-dihydroxy-2-butanone 4-phosphate. This is the penultimate step in the biosynthesis of riboflavin. The sequence is that of 6,7-dimethyl-8-ribityllumazine synthase from Nitrosospira multiformis (strain ATCC 25196 / NCIMB 11849 / C 71).